Consider the following 187-residue polypeptide: MIAAAASMSALGLGLGYLLGAAARKFHVETPPIVEEIAKILPGTNCGACGFPGCNGLAEAMAEGNAPVTACTPGGRDVALALAEIVTVEAGADAGPIAEIEPMVAFVFEDHCTGCQKCFKRCPTDAIVGGAKQIHTVVMDACIGCDACIEVCPTEAIVSRVKPKTLKTWYWDKPQPGLVAASAETAA.

The interval 1-23 is hydrophobic; the sequence is MIAAAASMSALGLGLGYLLGAAA. Residues 29 to 88 form the 4Fe-4S domain; the sequence is ETPPIVEEIAKILPGTNCGACGFPGCNGLAEAMAEGNAPVTACTPGGRDVALALAEIVTV. 12 residues coordinate [4Fe-4S] cluster: Cys46, Cys49, Cys54, Cys71, Cys112, Cys115, Cys118, Cys122, Cys142, Cys145, Cys148, and Cys152. 2 consecutive 4Fe-4S ferredoxin-type domains span residues 103 to 132 and 133 to 162; these read MVAF…GGAK and QIHT…SRVK.

The protein belongs to the 4Fe4S bacterial-type ferredoxin family. RnfB subfamily. The complex is composed of six subunits: RnfA, RnfB, RnfC, RnfD, RnfE and RnfG. The cofactor is [4Fe-4S] cluster.

The protein resides in the cellular chromatophore membrane. In terms of biological role, part of a membrane-bound complex that couples electron transfer with translocation of ions across the membrane. Required for nitrogen fixation. Involved in electron transfer to nitrogenase. The protein is Ion-translocating oxidoreductase complex subunit B of Rhodobacter capsulatus (Rhodopseudomonas capsulata).